We begin with the raw amino-acid sequence, 233 residues long: Protein FAM204A (233 aa).

Residues 1–126 form a disordered region; sequence MWSGLLPPGL…HSEPSSNETQ (126 aa). Acidic residues predominate over residues 13–24; that stretch reads SDAESNSEDEAT. Basic and acidic residues predominate over residues 39-58; the sequence is ESIRKTEIIDFSTDEPKTET. The segment covering 97 to 109 has biased composition (basic residues); it reads FRGKRRKRSRKDK. Residues 144 to 164 are a coiled coil; it reads VKRKKVEKSGLEKRIDQAVEE.

The chain is Protein FAM204A (FAM204A) from Homo sapiens (Human).